The chain runs to 177 residues: FANCD2 opposite strand protein (177 aa).

The protein is FANCD2 opposite strand protein (FANCD2OS) of Homo sapiens (Human).